The sequence spans 441 residues: ATP-dependent protease ATPase subunit HslU (441 aa).

Residues isoleucine 18, 60 to 65 (GVGKTE), aspartate 254, glutamate 319, and arginine 391 each bind ATP.

The protein belongs to the ClpX chaperone family. HslU subfamily. As to quaternary structure, a double ring-shaped homohexamer of HslV is capped on each side by a ring-shaped HslU homohexamer. The assembly of the HslU/HslV complex is dependent on binding of ATP.

Its subcellular location is the cytoplasm. Functionally, ATPase subunit of a proteasome-like degradation complex; this subunit has chaperone activity. The binding of ATP and its subsequent hydrolysis by HslU are essential for unfolding of protein substrates subsequently hydrolyzed by HslV. HslU recognizes the N-terminal part of its protein substrates and unfolds these before they are guided to HslV for hydrolysis. This is ATP-dependent protease ATPase subunit HslU from Shewanella sediminis (strain HAW-EB3).